Consider the following 491-residue polypeptide: F-box/LRR-repeat protein 7 (491 aa).

Positions 1–79 (MGANNGKQYG…GRGSSTSSSS (79 aa)) are disordered. Positions 10 to 26 (GSEGKGSSSISSDVSSS) are enriched in low complexity. The segment covering 27 to 55 (TDHTPTKAQKNVATSEDSDLSMRTLSTPS) has biased composition (polar residues). Positions 111–157 (QASIDRLPDHSMVQIFSFLPTNQLCRCARVCRRWYNLAWDPRLWRTI) constitute an F-box domain. LRR repeat units follow at residues 170-195 (LKVL…TVSG), 196-221 (CRRL…EVSG), 222-247 (CYNI…DVSG), 253-281 (CISL…DMTD), 282-307 (CFVL…YLRR), 308-333 (CVRL…SVSD), 334-359 (CRFV…SIAH), 360-385 (CGRV…NARG), 386-411 (CEGI…DIGK), 412-437 (CPLV…SLKS), and 438-463 (CESI…NVQD).

This sequence belongs to the FBXL7 family. As to quaternary structure, part of the SCF (SKP1-CUL1-F-box) E3 ubiquitin-protein ligase complex SCF(FBXL7) composed of CUL1, SKP1, RBX1 and FBXL7. Interacts with AURKA; interaction takes place during mitosis but not in interphase. Interacts with BIRC5; this interaction allows BIRC5 to be polyubiquitinated by the SCF(FBXL7) E3 ubiquitin-protein ligase complex.

The protein localises to the cytoplasm. The protein resides in the cytoskeleton. Its subcellular location is the microtubule organizing center. It is found in the centrosome. Its pathway is protein modification; protein ubiquitination. Its function is as follows. Substrate recognition component of a SCF (SKP1-CUL1-F-box protein) E3 ubiquitin-protein ligase complex. During mitosis, it mediates the ubiquitination and subsequent proteasomal degradation of AURKA, causing mitotic arrest. It also regulates mitochondrial function by mediating the ubiquitination and proteasomal degradation of the apoptosis inhibitor BIRC5. The polypeptide is F-box/LRR-repeat protein 7 (FBXL7) (Homo sapiens (Human)).